The following is a 239-amino-acid chain: MFQRLNKMFVGEVTTSSSQEPEFSEKEDDEWILVDFIDTCPGFSAEEEEEDEDIGEESSAEHTSVFSCLPASLECLTDTSDSCFLQFESCPMEESWFITPPPCFTAGGLTTIKVETSPMENLLIEHPSMSVYAVHNSCPGLSEASCGNDEYNSSGPRMEAQSEMGKHIHCCVAALAAQATFLEQPKSFRPSQWIKGHSERQSLNRNGLRRQNLTRDCHTRQMKHSGWVVHQPCPRQYNY.

The short motif at 25-37 is the LIR element; sequence EKEDDEWILVDFI.

In terms of assembly, interacts with p53/TP53 and HIPK2. Interacts with PRKCG, GABARAP, GABARAPL1, GABARAPL2, MAP1LC3A, MAP1LC3B and MAP1LC3C. In terms of tissue distribution, ubiquitously expressed with highest levels in the thymus.

The protein localises to the cytoplasm. It localises to the cytosol. The protein resides in the nucleus. Its subcellular location is the PML body. It is found in the cytoplasmic vesicle. The protein localises to the autophagosome. Functionally, antiproliferative and proapoptotic protein involved in cell stress response which acts as a dual regulator of transcription and autophagy. Acts as a positive regulator of autophagy. In response to cellular stress or activation of autophagy, relocates to autophagosomes where it interacts with autophagosome-associated proteins GABARAP, GABARAPL1/L2, MAP1LC3A/B/C and regulates autophagy. Acts as an antioxidant and plays a major role in p53/TP53-driven oxidative stress response. Possesses both a p53/TP53-independent intracellular reactive oxygen species (ROS) regulatory function and a p53/TP53-dependent transcription regulatory function. Positively regulates p53/TP53 and p73/TP73 and stimulates their capacity to induce apoptosis and regulate cell cycle. In response to double-strand DNA breaks, promotes p53/TP53 phosphorylation on 'Ser-46' and subsequent apoptosis. Acts as a tumor suppressor by inducing cell death by an autophagy and caspase-dependent mechanism. Can reduce cell migration by regulating the expression of SPARC. The sequence is that of Tumor protein p53-inducible nuclear protein 1 (Trp53inp1) from Mus musculus (Mouse).